Here is a 412-residue protein sequence, read N- to C-terminus: MLGSTGSIGTQTLEIAEEFPERFRVVALTAGTNVSLVVEQIQRHHPEVVALADASLLPELKQQLNALPSEQQPPHLPQLLAGPEGLNVAASWDSADLVVSGIVGCAGLLPTLAAIKAGKDLALANKETLIAAAPVVLPELKRSGSRLLPADSEHSAIFQCLQGTPWAENARLSTGVPTPGLRHIQLTASGGAFRDWSAKDLEKATIADATSHPNWSMGRKITVDSATLMNKGLEVIEAHYLFGIDYNQIEIVIHPQSIIHSMIELADSSVLGQLGWPDMKLPILYCLSWPERLETPWRRLNLAEVGELTFRAPDTKKYPCMKLAYAAGRAGGTMPAVLNAANEEAVAQFLEERIHFLDIPEVIEAACERHKPDLQTQPQLDDVLAVDAWARKAVQEQVKRGTRRLPLPALTA.

The NADPH site is built by Thr-5, Gly-6, Ser-7, Ile-8, Gly-31, Asn-33, and Asn-125. A 1-deoxy-D-xylulose 5-phosphate-binding site is contributed by Lys-126. Glu-127 serves as a coordination point for NADPH. Asp-151 lines the Mn(2+) pocket. 1-deoxy-D-xylulose 5-phosphate contacts are provided by Ser-152, Glu-153, Ser-189, and His-212. A Mn(2+)-binding site is contributed by Glu-153. Gly-218 contacts NADPH. 1-deoxy-D-xylulose 5-phosphate is bound by residues Ser-225, Asn-230, Lys-231, and Glu-234. Glu-234 provides a ligand contact to Mn(2+).

The protein belongs to the DXR family. Mg(2+) is required as a cofactor. The cofactor is Mn(2+).

It catalyses the reaction 2-C-methyl-D-erythritol 4-phosphate + NADP(+) = 1-deoxy-D-xylulose 5-phosphate + NADPH + H(+). The protein operates within isoprenoid biosynthesis; isopentenyl diphosphate biosynthesis via DXP pathway; isopentenyl diphosphate from 1-deoxy-D-xylulose 5-phosphate: step 1/6. Functionally, catalyzes the NADPH-dependent rearrangement and reduction of 1-deoxy-D-xylulose-5-phosphate (DXP) to 2-C-methyl-D-erythritol 4-phosphate (MEP). The chain is 1-deoxy-D-xylulose 5-phosphate reductoisomerase from Prochlorococcus marinus (strain MIT 9313).